A 337-amino-acid chain; its full sequence is Ornithine carbamoyltransferase, catabolic (337 aa).

Carbamoyl phosphate contacts are provided by residues 57 to 60 (STRT), Gln-84, Arg-108, and 135 to 138 (HPTQ). Residues Asn-167, Asp-231, and 235–236 (SM) contribute to the L-ornithine site. Residues 272–273 (CL) and Arg-317 contribute to the carbamoyl phosphate site.

The protein belongs to the aspartate/ornithine carbamoyltransferase superfamily. OTCase family.

The protein resides in the cytoplasm. It carries out the reaction carbamoyl phosphate + L-ornithine = L-citrulline + phosphate + H(+). It participates in amino-acid degradation; L-arginine degradation via ADI pathway; carbamoyl phosphate from L-arginine: step 2/2. Functionally, reversibly catalyzes the transfer of the carbamoyl group from carbamoyl phosphate (CP) to the N(epsilon) atom of ornithine (ORN) to produce L-citrulline. In Streptococcus suis (strain 89/1591), this protein is Ornithine carbamoyltransferase, catabolic.